We begin with the raw amino-acid sequence, 521 residues long: Protein nucleotidyltransferase YdiU (521 aa).

Gly-109, Gly-111, Arg-112, Lys-131, Asp-143, Gly-144, Arg-194, and Arg-201 together coordinate ATP. The active-site Proton acceptor is Asp-270. Positions 271 and 280 each coordinate Mg(2+). Residue Asp-280 participates in ATP binding.

Belongs to the SELO family. Mg(2+) is required as a cofactor. Requires Mn(2+) as cofactor.

It catalyses the reaction L-seryl-[protein] + ATP = 3-O-(5'-adenylyl)-L-seryl-[protein] + diphosphate. The enzyme catalyses L-threonyl-[protein] + ATP = 3-O-(5'-adenylyl)-L-threonyl-[protein] + diphosphate. The catalysed reaction is L-tyrosyl-[protein] + ATP = O-(5'-adenylyl)-L-tyrosyl-[protein] + diphosphate. It carries out the reaction L-histidyl-[protein] + UTP = N(tele)-(5'-uridylyl)-L-histidyl-[protein] + diphosphate. It catalyses the reaction L-seryl-[protein] + UTP = O-(5'-uridylyl)-L-seryl-[protein] + diphosphate. The enzyme catalyses L-tyrosyl-[protein] + UTP = O-(5'-uridylyl)-L-tyrosyl-[protein] + diphosphate. Nucleotidyltransferase involved in the post-translational modification of proteins. It can catalyze the addition of adenosine monophosphate (AMP) or uridine monophosphate (UMP) to a protein, resulting in modifications known as AMPylation and UMPylation. The sequence is that of Protein nucleotidyltransferase YdiU from Burkholderia pseudomallei (strain 1106a).